A 319-amino-acid polypeptide reads, in one-letter code: Cytochrome c biogenesis protein CcsA (319 aa).

The next 7 helical transmembrane spans lie at 17 to 37 (TISI…LGGL), 44 to 64 (GMIV…ASSG), 68 to 88 (LSNL…LHTI), 143 to 163 (MLLS…ILII), 223 to 243 (VISL…VWAN), 257 to 271 (TWAF…IYLH), and 286 to 306 (VASI…LLGI).

Belongs to the CcmF/CycK/Ccl1/NrfE/CcsA family. As to quaternary structure, may interact with Ccs1.

It is found in the plastid. Its subcellular location is the chloroplast thylakoid membrane. Functionally, required during biogenesis of c-type cytochromes (cytochrome c6 and cytochrome f) at the step of heme attachment. The sequence is that of Cytochrome c biogenesis protein CcsA from Lolium perenne (Perennial ryegrass).